Reading from the N-terminus, the 299-residue chain is Coenzyme PQQ synthesis protein B (299 aa).

This sequence belongs to the PqqB family.

Its pathway is cofactor biosynthesis; pyrroloquinoline quinone biosynthesis. Its function is as follows. May be involved in the transport of PQQ or its precursor to the periplasm. The polypeptide is Coenzyme PQQ synthesis protein B (Methylobacterium nodulans (strain LMG 21967 / CNCM I-2342 / ORS 2060)).